Here is a 416-residue protein sequence, read N- to C-terminus: Phosphoglycerate kinase (416 aa).

14 residues coordinate (2R)-3-phosphoglycerate: V22, D23, F24, N25, Q37, R38, S61, H62, G64, R65, L120, R121, H168, and R169. G212 provides a ligand contact to ADP. Residue G212 coordinates CDP. Positions 213 and 214 each coordinate AMP. A213 is a binding site for ATP. A213 contributes to the Mg(2+) binding site. Residue D217 coordinates CDP. Residue D217 coordinates Mg(2+). K218 contributes to the AMP binding site. K218 is an ATP binding site. G236 provides a ligand contact to ADP. G236 is a CDP binding site. Residues G237 and G311 each contribute to the AMP site. The ATP site is built by G237 and G311. The CDP site is built by G336 and F341. F341 serves as a coordination point for ADP. E342 provides a ligand contact to AMP. ATP-binding residues include E342, D373, and T374. D373 contributes to the Mg(2+) binding site.

This sequence belongs to the phosphoglycerate kinase family. Monomer. Requires Mg(2+) as cofactor. As to expression, expressed in all cells of the worm (at protein level), higher expression in the cells associated with the tubercles (tegumental modifications), the muscle and along the tegument.

It catalyses the reaction (2R)-3-phosphoglycerate + ATP = (2R)-3-phospho-glyceroyl phosphate + ADP. It participates in carbohydrate degradation; glycolysis; pyruvate from D-glyceraldehyde 3-phosphate: step 2/5. Involved in the seventh step in glycolysis. Catalyzes the conversion of 1,3-bisphosphoglycerate ((2R)-3-phospho-glyceroyl phosphate) to 3-phosphoglycerate ((2R)-3-phosphoglycerate) and results in the formation of ATP. Associated with the tegument to provide the energy needed for the tegumental repair resulting from immune damage. In Schistosoma mansoni (Blood fluke), this protein is Phosphoglycerate kinase (PGK).